The chain runs to 281 residues: NADPH-dependent 7-cyano-7-deazaguanine reductase (281 aa).

Substrate is bound at residue 81–83; sequence IES. 83-84 provides a ligand contact to NADPH; that stretch reads SK. Cys188 acts as the Thioimide intermediate in catalysis. The active-site Proton donor is Asp195. 227 to 228 is a substrate binding site; the sequence is HE. 256–257 serves as a coordination point for NADPH; it reads RG.

Belongs to the GTP cyclohydrolase I family. QueF type 2 subfamily. As to quaternary structure, homodimer.

Its subcellular location is the cytoplasm. The enzyme catalyses 7-aminomethyl-7-carbaguanine + 2 NADP(+) = 7-cyano-7-deazaguanine + 2 NADPH + 3 H(+). Its pathway is tRNA modification; tRNA-queuosine biosynthesis. Its function is as follows. Catalyzes the NADPH-dependent reduction of 7-cyano-7-deazaguanine (preQ0) to 7-aminomethyl-7-deazaguanine (preQ1). The protein is NADPH-dependent 7-cyano-7-deazaguanine reductase of Paracidovorax citrulli (strain AAC00-1) (Acidovorax citrulli).